Here is a 212-residue protein sequence, read N- to C-terminus: ATP-dependent dethiobiotin synthetase BioD (212 aa).

10-15 (GVGKTF) lines the ATP pocket. Residue Thr14 participates in Mg(2+) binding. Residue Lys36 is part of the active site. Ser40 provides a ligand contact to substrate. ATP contacts are provided by residues Asp45, 106-109 (EGAG), and 167-168 (NC). Residues Asp45 and Glu106 each contribute to the Mg(2+) site.

The protein belongs to the dethiobiotin synthetase family. Homodimer. Mg(2+) is required as a cofactor.

It localises to the cytoplasm. It carries out the reaction (7R,8S)-7,8-diammoniononanoate + CO2 + ATP = (4R,5S)-dethiobiotin + ADP + phosphate + 3 H(+). Its pathway is cofactor biosynthesis; biotin biosynthesis; biotin from 7,8-diaminononanoate: step 1/2. Functionally, catalyzes a mechanistically unusual reaction, the ATP-dependent insertion of CO2 between the N7 and N8 nitrogen atoms of 7,8-diaminopelargonic acid (DAPA, also called 7,8-diammoniononanoate) to form a ureido ring. This Methanococcus aeolicus (strain ATCC BAA-1280 / DSM 17508 / OCM 812 / Nankai-3) protein is ATP-dependent dethiobiotin synthetase BioD.